Here is a 211-residue protein sequence, read N- to C-terminus: Probable transcriptional regulatory protein SgaR (211 aa).

In terms of domain architecture, Response regulatory spans 10 to 126 (EVSIVDQNPV…VLLEAVVSVA (117 aa)). 4-aspartylphosphate is present on Asp-15. In terms of domain architecture, HTH luxR-type spans 141–206 (NHDPLESLTA…MAVALHVSIN (66 aa)). A DNA-binding region (H-T-H motif) is located at residues 165–184 (NLQIAARTGISRNTVKYHLK).

Functionally, not known. Could act on the sgaA gene expression. The sequence is that of Probable transcriptional regulatory protein SgaR (sgaR) from Hyphomicrobium methylovorum.